A 52-amino-acid chain; its full sequence is Protein PROPEP890 (52 aa).

The tract at residues 27–52 is disordered; the sequence is PQADLPQTPNSQVRIVSRDLPRGGNY. The segment covering 31-40 has biased composition (polar residues); sequence LPQTPNSQVR. The segment covering 42 to 52 has biased composition (basic and acidic residues); it reads VSRDLPRGGNY.

In terms of tissue distribution, expressed in roots. Barely detected in flowers.

Its function is as follows. Produces a rapid alkalinization of the cellular media and the induction of defense-related genes, including chitinase 1b, chalcone synthase and CYP93A1. Not active in tobacco or Arabidopsis. The receptor for GmPep890 is probably different from the receptor for GmSubPep. The chain is Protein PROPEP890 (PROPEP890) from Glycine max (Soybean).